A 273-amino-acid chain; its full sequence is Imidazole glycerol phosphate synthase subunit HisF (273 aa).

Catalysis depends on residues aspartate 11 and aspartate 134.

The protein belongs to the HisA/HisF family. In terms of assembly, heterodimer of HisH and HisF.

The protein localises to the cytoplasm. It carries out the reaction 5-[(5-phospho-1-deoxy-D-ribulos-1-ylimino)methylamino]-1-(5-phospho-beta-D-ribosyl)imidazole-4-carboxamide + L-glutamine = D-erythro-1-(imidazol-4-yl)glycerol 3-phosphate + 5-amino-1-(5-phospho-beta-D-ribosyl)imidazole-4-carboxamide + L-glutamate + H(+). It functions in the pathway amino-acid biosynthesis; L-histidine biosynthesis; L-histidine from 5-phospho-alpha-D-ribose 1-diphosphate: step 5/9. Functionally, IGPS catalyzes the conversion of PRFAR and glutamine to IGP, AICAR and glutamate. The HisF subunit catalyzes the cyclization activity that produces IGP and AICAR from PRFAR using the ammonia provided by the HisH subunit. In Methanocella arvoryzae (strain DSM 22066 / NBRC 105507 / MRE50), this protein is Imidazole glycerol phosphate synthase subunit HisF.